A 126-amino-acid polypeptide reads, in one-letter code: UPF0538 protein C2orf76 homolog (126 aa).

Belongs to the UPF0538 family.

The sequence is that of UPF0538 protein C2orf76 homolog from Xenopus tropicalis (Western clawed frog).